The sequence spans 120 residues: Large ribosomal subunit protein bL20 (120 aa).

This sequence belongs to the bacterial ribosomal protein bL20 family.

Functionally, binds directly to 23S ribosomal RNA and is necessary for the in vitro assembly process of the 50S ribosomal subunit. It is not involved in the protein synthesizing functions of that subunit. This chain is Large ribosomal subunit protein bL20, found in Cereibacter sphaeroides (strain ATCC 17029 / ATH 2.4.9) (Rhodobacter sphaeroides).